Consider the following 120-residue polypeptide: Large ribosomal subunit protein bL20 (120 aa).

This sequence belongs to the bacterial ribosomal protein bL20 family.

In terms of biological role, binds directly to 23S ribosomal RNA and is necessary for the in vitro assembly process of the 50S ribosomal subunit. It is not involved in the protein synthesizing functions of that subunit. This is Large ribosomal subunit protein bL20 from Ligilactobacillus salivarius (strain UCC118) (Lactobacillus salivarius).